Consider the following 101-residue polypeptide: Small ribosomal subunit protein uS14 (101 aa).

It belongs to the universal ribosomal protein uS14 family. Part of the 30S ribosomal subunit. Contacts proteins S3 and S10.

Functionally, binds 16S rRNA, required for the assembly of 30S particles and may also be responsible for determining the conformation of the 16S rRNA at the A site. This Cupriavidus metallidurans (strain ATCC 43123 / DSM 2839 / NBRC 102507 / CH34) (Ralstonia metallidurans) protein is Small ribosomal subunit protein uS14.